Reading from the N-terminus, the 471-residue chain is Sulfate adenylyltransferase subunit 1 (471 aa).

One can recognise a tr-type G domain in the interval 22 to 239; the sequence is KDMLRFLTCG…NIEIGEDDNL (218 aa). The interval 31–38 is G1; that stretch reads GSVDDGKS. A GTP-binding site is contributed by 31–38; it reads GSVDDGKS. A G2 region spans residues 89-93; that stretch reads GITID. The segment at 110-113 is G3; sequence DTPG. Residues 110–114 and 165–168 each bind GTP; these read DTPGH and NKMD. Residues 165–168 form a G4 region; the sequence is NKMD. The tract at residues 202–204 is G5; that stretch reads SAL.

Belongs to the TRAFAC class translation factor GTPase superfamily. Classic translation factor GTPase family. CysN/NodQ subfamily. As to quaternary structure, heterodimer composed of CysD, the smaller subunit, and CysN.

It catalyses the reaction sulfate + ATP + H(+) = adenosine 5'-phosphosulfate + diphosphate. It participates in sulfur metabolism; hydrogen sulfide biosynthesis; sulfite from sulfate: step 1/3. Functionally, with CysD forms the ATP sulfurylase (ATPS) that catalyzes the adenylation of sulfate producing adenosine 5'-phosphosulfate (APS) and diphosphate, the first enzymatic step in sulfur assimilation pathway. APS synthesis involves the formation of a high-energy phosphoric-sulfuric acid anhydride bond driven by GTP hydrolysis by CysN coupled to ATP hydrolysis by CysD. The polypeptide is Sulfate adenylyltransferase subunit 1 (Alteromonas mediterranea (strain DSM 17117 / CIP 110805 / LMG 28347 / Deep ecotype)).